Here is a 217-residue protein sequence, read N- to C-terminus: tRNA (guanine-N(7)-)-methyltransferase (217 aa).

S-adenosyl-L-methionine is bound by residues Glu-48, Glu-73, Asn-100, and Asp-123. The active site involves Asp-123. Lys-127 and Asp-159 together coordinate substrate.

The protein belongs to the class I-like SAM-binding methyltransferase superfamily. TrmB family.

The catalysed reaction is guanosine(46) in tRNA + S-adenosyl-L-methionine = N(7)-methylguanosine(46) in tRNA + S-adenosyl-L-homocysteine. Its pathway is tRNA modification; N(7)-methylguanine-tRNA biosynthesis. Functionally, catalyzes the formation of N(7)-methylguanine at position 46 (m7G46) in tRNA. This chain is tRNA (guanine-N(7)-)-methyltransferase, found in Leptospira borgpetersenii serovar Hardjo-bovis (strain JB197).